A 439-amino-acid chain; its full sequence is Transmembrane protease serine 11F (439 aa).

Over 1–33 (MMYAPVEFSQTAYPRIEYQRRQQQFWDPIRLAL) the chain is Cytoplasmic. A helical; Signal-anchor for type II membrane protein membrane pass occupies residues 34–54 (FTLAIVAIVGITIGIVTHFVV). Over 55–439 (EDDKSFYYLA…RDWIASKTGL (385 aa)) the chain is Extracellular. The SEA domain occupies 58-176 (KSFYYLASFQ…PSFSLTPIDS (119 aa)). Residues 207–438 (IVQGRETAME…YRDWIASKTG (232 aa)) enclose the Peptidase S1 domain. Cysteine 234 and cysteine 250 are disulfide-bonded. Residues histidine 249 and aspartate 294 each act as charge relay system in the active site. Cystine bridges form between cysteine 359/cysteine 375 and cysteine 386/cysteine 414. The active-site Charge relay system is serine 390.

Belongs to the peptidase S1 family.

The protein resides in the membrane. In terms of biological role, probable serine protease. This is Transmembrane protease serine 11F (Tmprss11f) from Mus musculus (Mouse).